Here is a 1191-residue protein sequence, read N- to C-terminus: Homeodomain-interacting protein kinase 3 (1191 aa).

Lys-27 participates in a covalent cross-link: Glycyl lysine isopeptide (Lys-Gly) (interchain with G-Cter in SUMO2). The region spanning 197 to 525 (YEVLDFLGRG…PIETLNHPFV (329 aa)) is the Protein kinase domain. Residues 203–211 (LGRGTFGQV) and Lys-226 each bind ATP. The active-site Proton acceptor is Asp-322. The residue at position 359 (Tyr-359) is a Phosphotyrosine. The tract at residues 766–920 (QNRSNSLQNT…NSMSDDEQES (155 aa)) is interaction with AR. The interaction with FAS stretch occupies residues 774–867 (NTNVPHSAFI…SPRPSLRECK (94 aa)). Residues 801-828 (TQDNHTSEGEARTCHEASVRQDSSVSDK) are disordered. Over residues 802-828 (QDNHTSEGEARTCHEASVRQDSSVSDK) the composition is skewed to basic and acidic residues. Residues 846 to 856 (ITISSDTDDEE) are interaction with UBL1. Low complexity predominate over residues 888-905 (SSPDSTLSTSSSGQSSPS). 2 disordered regions span residues 888 to 960 (SSPD…TCAG) and 993 to 1022 (TCQPLTKGQPAPGKLNQPSASAARQQKPTS). Positions 1008–1022 (NQPSASAARQQKPTS) are enriched in polar residues.

Belongs to the protein kinase superfamily. CMGC Ser/Thr protein kinase family. HIPK subfamily. As to quaternary structure, interacts with Nkx1-2. Interacts with FAS and DAXX. Probably part of a complex consisting of HIPK3, FAS and FADD. Interacts with UBL1/SUMO-1. Interacts with and stabilizes ligand-bound androgen receptor (AR). In terms of processing, autophosphorylated. Autophosphorylation is not required for catalytic activity. Post-translationally, may be sumoylated.

Its subcellular location is the nucleus. It carries out the reaction L-seryl-[protein] + ATP = O-phospho-L-seryl-[protein] + ADP + H(+). The enzyme catalyses L-threonyl-[protein] + ATP = O-phospho-L-threonyl-[protein] + ADP + H(+). Its function is as follows. Seems to negatively regulate apoptosis by promoting FADD phosphorylation. Enhances androgen receptor-mediated transcription. May act as a transcriptional corepressor for NK homeodomain transcription factors. This is Homeodomain-interacting protein kinase 3 (Hipk3) from Rattus norvegicus (Rat).